Here is a 300-residue protein sequence, read N- to C-terminus: L-arabinolactonase (300 aa).

Positions 22, 156, and 205 each coordinate a divalent metal cation.

Belongs to the SMP-30/CGR1 family. Requires a divalent metal cation as cofactor.

The catalysed reaction is L-arabinono-1,4-lactone + H2O = L-arabinonate + H(+). Catalyzes the cleavage of L-arabino-gamma-lactone to L-arabonate. Is involved in a degradation pathway of L-arabinose that allows A.brasilense to grow on L-arabinose as a sole carbon source. Can also use D-galactono-1,4-lactone as substrate in vitro; however, the enzyme is probably not involved in the metabolism of D-galactose in vivo. In Azospirillum brasilense, this protein is L-arabinolactonase (araB).